We begin with the raw amino-acid sequence, 36 residues long: Photosystem II reaction center protein M (36 aa).

Residues 5 to 25 (ILGLIATALFIIIPTSFLLIL) traverse the membrane as a helical segment.

It belongs to the PsbM family. PSII is composed of 1 copy each of membrane proteins PsbA, PsbB, PsbC, PsbD, PsbE, PsbF, PsbH, PsbI, PsbJ, PsbK, PsbL, PsbM, PsbT, PsbX, PsbY, PsbZ, Psb30/Ycf12, at least 3 peripheral proteins of the oxygen-evolving complex and a large number of cofactors. It forms dimeric complexes.

The protein resides in the plastid. It is found in the chloroplast thylakoid membrane. Functionally, one of the components of the core complex of photosystem II (PSII). PSII is a light-driven water:plastoquinone oxidoreductase that uses light energy to abstract electrons from H(2)O, generating O(2) and a proton gradient subsequently used for ATP formation. It consists of a core antenna complex that captures photons, and an electron transfer chain that converts photonic excitation into a charge separation. This subunit is found at the monomer-monomer interface. The sequence is that of Photosystem II reaction center protein M from Chlorokybus atmophyticus (Soil alga).